Consider the following 311-residue polypeptide: Probable flavin reductase (311 aa).

Residues 38–41, 55–61, 88–89, and Arg95 contribute to the FMN site; these read TANS, CLAKSSR, and FA.

This sequence belongs to the non-flavoprotein flavin reductase family.

The sequence is that of Probable flavin reductase from Rhizobium meliloti (strain 1021) (Ensifer meliloti).